We begin with the raw amino-acid sequence, 577 residues long: Acyl-coenzyme A synthetase ACSM2B, mitochondrial (577 aa).

A mitochondrion-targeting transit peptide spans 1 to 46 (MHWLRKVQGLCTLWGTQMSSRTLYINSRQLVSLQWGHQEVPAKFNF). Position 139 (Q139) interacts with CoA. ATP is bound by residues 221–229 (TSGTSGLPK), 359–364 (EFYGQT), D446, and R461. T364 serves as a coordination point for substrate. 469–471 (SGY) lines the CoA pocket. Position 472 (R472) interacts with substrate. CoA is bound at residue R501. The residue at position 513 (S513) is a Phosphoserine. Residues K532 and 540-542 (YPR) each bind CoA. Residue K557 coordinates ATP.

The protein belongs to the ATP-dependent AMP-binding enzyme family. In terms of assembly, monomer. The cofactor is Mg(2+). Requires Mn(2+) as cofactor. As to expression, detected in liver.

It is found in the mitochondrion. The catalysed reaction is a medium-chain fatty acid + ATP + CoA = a medium-chain fatty acyl-CoA + AMP + diphosphate. The enzyme catalyses benzoate + ATP + CoA = benzoyl-CoA + AMP + diphosphate. It catalyses the reaction hexanoate + ATP + CoA = hexanoyl-CoA + AMP + diphosphate. It carries out the reaction butanoate + ATP + CoA = butanoyl-CoA + AMP + diphosphate. The catalysed reaction is octanoate + ATP + CoA = octanoyl-CoA + AMP + diphosphate. The enzyme catalyses decanoate + ATP + CoA = decanoyl-CoA + AMP + diphosphate. With respect to regulation, activated by monovalent cations, such as potassium, rubidium or ammonium. Its function is as follows. Catalyzes the activation of fatty acids by CoA to produce an acyl-CoA, the first step in fatty acid metabolism. Capable of activating medium-chain fatty acids (e.g. butyric (C4) to decanoic (C10) acids), and certain carboxylate-containing xenobiotics, e.g. benzoate. The polypeptide is Acyl-coenzyme A synthetase ACSM2B, mitochondrial (ACSM2B) (Homo sapiens (Human)).